Consider the following 111-residue polypeptide: 2Fe-2S ferredoxin (111 aa).

Residues 1–104 enclose the 2Fe-2S ferredoxin-type domain; the sequence is MPKVLFLPHK…DIEVEIPLYN (104 aa). [2Fe-2S] cluster contacts are provided by C42, C48, C51, and C87.

This sequence belongs to the adrenodoxin/putidaredoxin family. [2Fe-2S] cluster is required as a cofactor.

Ferredoxin are iron-sulfur proteins that transfer electrons in a wide variety of metabolic reactions. This is 2Fe-2S ferredoxin (fdx) from Buchnera aphidicola subsp. Acyrthosiphon pisum (strain APS) (Acyrthosiphon pisum symbiotic bacterium).